We begin with the raw amino-acid sequence, 362 residues long: uncharacterized protein (362 aa).

Residue Ala2 is modified to N-acetylalanine.

The protein belongs to the Gfo/Idh/MocA family. Homodimer.

This is an uncharacterized protein from Arabidopsis thaliana (Mouse-ear cress).